The following is a 324-amino-acid chain: Beta-ketoacyl-[acyl-carrier-protein] synthase III (324 aa).

Catalysis depends on residues C112 and H251. The interval 252-256 (QANLR) is ACP-binding. N281 is an active-site residue.

Belongs to the thiolase-like superfamily. FabH family. Homodimer.

It is found in the cytoplasm. It catalyses the reaction malonyl-[ACP] + acetyl-CoA + H(+) = 3-oxobutanoyl-[ACP] + CO2 + CoA. The protein operates within lipid metabolism; fatty acid biosynthesis. In terms of biological role, catalyzes the condensation reaction of fatty acid synthesis by the addition to an acyl acceptor of two carbons from malonyl-ACP. Catalyzes the first condensation reaction which initiates fatty acid synthesis and may therefore play a role in governing the total rate of fatty acid production. Possesses both acetoacetyl-ACP synthase and acetyl transacylase activities. Its substrate specificity determines the biosynthesis of branched-chain and/or straight-chain of fatty acids. The sequence is that of Beta-ketoacyl-[acyl-carrier-protein] synthase III from Clostridium perfringens (strain SM101 / Type A).